Reading from the N-terminus, the 450-residue chain is Glutamate-1-semialdehyde 2,1-aminomutase (450 aa).

At Lys262 the chain carries N6-(pyridoxal phosphate)lysine.

This sequence belongs to the class-III pyridoxal-phosphate-dependent aminotransferase family. HemL subfamily. In terms of assembly, homodimer. It depends on pyridoxal 5'-phosphate as a cofactor.

It localises to the cytoplasm. It catalyses the reaction (S)-4-amino-5-oxopentanoate = 5-aminolevulinate. It participates in porphyrin-containing compound metabolism; protoporphyrin-IX biosynthesis; 5-aminolevulinate from L-glutamyl-tRNA(Glu): step 2/2. This Campylobacter hominis (strain ATCC BAA-381 / DSM 21671 / CCUG 45161 / LMG 19568 / NCTC 13146 / CH001A) protein is Glutamate-1-semialdehyde 2,1-aminomutase.